A 333-amino-acid polypeptide reads, in one-letter code: Dehydrodolichyl diphosphate synthase complex subunit DHDDS (333 aa).

Residues Asp-34, Gly-35, Arg-37, Arg-38, and Arg-85 each coordinate (2E,6E)-farnesyl diphosphate. Positions 34, 35, 37, 38, 85, 205, 211, and 213 each coordinate isopentenyl diphosphate. Asp-34 is a binding site for Mg(2+).

It belongs to the UPP synthase family. The active dehydrodolichyl diphosphate synthase complex is a heterotetramer composed of a dimer of heterodimer of DHDDS and NUS1. Interacts with NPC2. Mg(2+) serves as cofactor. In terms of tissue distribution, ubiquitous. Expressed at high levels in testis and kidney. Expressed in epididymis (at protein level).

Its subcellular location is the endoplasmic reticulum membrane. The catalysed reaction is n isopentenyl diphosphate + (2E,6E)-farnesyl diphosphate = a di-trans,poly-cis-polyprenyl diphosphate + n diphosphate. Its pathway is protein modification; protein glycosylation. It participates in lipid metabolism. With respect to regulation, activated by phospholipids including cardiolipin, phosphatidylcholine, phosphatidylethanolamine, phosphatidylinositol and phosphatidylserine. Functionally, with NUS1, forms the dehydrodolichyl diphosphate synthase (DDS) complex, an essential component of the dolichol monophosphate (Dol-P) biosynthetic machinery. Both subunits contribute to enzymatic activity, i.e. condensation of multiple copies of isopentenyl pyrophosphate (IPP) to farnesyl pyrophosphate (FPP) to produce dehydrodolichyl diphosphate (Dedol-PP), a precursor of dolichol phosphate which is utilized as a sugar carrier in protein glycosylation in the endoplasmic reticulum (ER). Synthesizes long-chain polyprenols, mostly of C95 and C100 chain length. Regulates the glycosylation and stability of nascent NPC2, thereby promoting trafficking of LDL-derived cholesterol. The protein is Dehydrodolichyl diphosphate synthase complex subunit DHDDS of Homo sapiens (Human).